A 221-amino-acid polypeptide reads, in one-letter code: MPNSTDNQGSAPPGLSSRPLPSSFDDNADFYNENGFQKVSRRLREEPLIPIGCIATVAAFTGAYRAMRRGDHEQVQRMFRARVAAQAFTVVAMVAGSWYYAADRQKQKELWKLKEQQDAEEKRQKWIRELEVRDAEDKALQERLEKRRKKKAERDSAAGAPDGVAAQAQAAYADAKEKVSSPAGDVAPEDPNKSNITGVRERLPTWLGGSKGADGSSRDKN.

Positions 1–29 (MPNSTDNQGSAPPGLSSRPLPSSFDDNAD) are disordered. Residues 9-23 (GSAPPGLSSRPLPSS) are compositionally biased toward low complexity. The HIG1 domain maps to 20 to 111 (LPSSFDDNAD…ADRQKQKELW (92 aa)). The next 2 membrane-spanning stretches (helical) occupy residues 46 to 68 (EPLI…RAMR) and 83 to 102 (VAAQ…YYAA). The stretch at 112–151 (KLKEQQDAEEKRQKWIRELEVRDAEDKALQERLEKRRKKK) forms a coiled coil. The tract at residues 144 to 221 (LEKRRKKKAE…GADGSSRDKN (78 aa)) is disordered. The segment covering 157–173 (AAGAPDGVAAQAQAAYA) has biased composition (low complexity).

The protein belongs to the RCF1 family. As to quaternary structure, associates with the respiratory chain complex III/complex IV supercomplex.

Its subcellular location is the mitochondrion membrane. Functionally, cytochrome c oxidase subunit which plays a role in assembly of respiratory supercomplexes. This Neurospora crassa (strain ATCC 24698 / 74-OR23-1A / CBS 708.71 / DSM 1257 / FGSC 987) protein is Respiratory supercomplex factor 1, mitochondrial (rcf1).